A 517-amino-acid chain; its full sequence is DNA-binding protein (517 aa).

Polar residues predominate over residues 1–10; sequence MASRGGNQSS. The tract at residues 1 to 110 is disordered; it reads MASRGGNQSS…DISQDSEEER (110 aa). The segment covering 64–80 has biased composition (low complexity); sequence VLVSETSRSSLSPERSN. Basic residues predominate over residues 87-96; the sequence is PKKKPRKTKH. The residue at position 180 (Tyr-180) is a Phosphotyrosine; by host. Zn(2+)-binding residues include Cys-269 and His-271. Residues 282–316 form a flexible loop region; the sequence is IEMDVASENGQRAMKENPDRAKITQNRWGRNVVQL. Positions 324, 340, 382, 384, 436, and 453 each coordinate Zn(2+). Residues 501 to 517 are C-terminal arm, DBP binding; sequence VSLPAGHYDSRQNPFDF.

Belongs to the adenoviridae E2A DNA-binding protein family. In terms of assembly, homomultimerizes on viral ssDNA bound to pTP. Forms a initiation complex with viral polymerase, pTP and hosts NFIA and POU2F1/OCT1. Interacts with host SRCAP.

The protein resides in the host nucleus. Functionally, plays a role in the elongation phase of viral strand displacement replication by unwinding the template in an ATP-independent fashion, employing its capacity to form multimers. Also enhances the rate of initiation. Released from template upon second strand synthesis. Assembles in complex with viral pTP, viral pol, host NFIA and host POU2F1/OCT1 on viral origin of replication. Covers the whole ssDNA genome during synthesis. The complementary strand synthesis induces its relese from DNA template. May inhibit cellular transcription mediated by the interaction between host SRCAP and CBP. The polypeptide is DNA-binding protein (Human adenovirus B serotype 7 (HAdV-7)).